The sequence spans 353 residues: Fe(3+) ions import ATP-binding protein FbpC (353 aa).

The 231-residue stretch at 9–239 (VVFENVRKTF…PASSFIADFM (231 aa)) folds into the ABC transporter domain. 41-48 (GPSGCGKT) serves as a coordination point for ATP.

This sequence belongs to the ABC transporter superfamily. Fe(3+) ion importer (TC 3.A.1.10) family. As to quaternary structure, the complex is composed of two ATP-binding proteins (FbpC), two transmembrane proteins (FbpB) and a solute-binding protein (FbpA).

The protein localises to the cell inner membrane. The catalysed reaction is Fe(3+)(out) + ATP + H2O = Fe(3+)(in) + ADP + phosphate + H(+). Functionally, part of the ABC transporter complex FbpABC involved in Fe(3+) ions import. Responsible for energy coupling to the transport system. This Agrobacterium fabrum (strain C58 / ATCC 33970) (Agrobacterium tumefaciens (strain C58)) protein is Fe(3+) ions import ATP-binding protein FbpC.